A 92-amino-acid polypeptide reads, in one-letter code: Small ribosomal subunit protein uS19 (92 aa).

This sequence belongs to the universal ribosomal protein uS19 family.

Functionally, protein S19 forms a complex with S13 that binds strongly to the 16S ribosomal RNA. This Vibrio vulnificus (strain CMCP6) protein is Small ribosomal subunit protein uS19.